The primary structure comprises 824 residues: Dapper 1 (824 aa).

Disordered stretches follow at residues 1-34 (MKPIPATPDHLGQHQESPRRKDKGEAESERQRTR), 61-80 (ALTPGAPTHGDTATRAGDTP), 131-150 (EEHLETDSRPSSGFYELSDG), 454-487 (TSNVQKENVTPNAPTNLSNASSSACNGSPRESTQ), and 516-536 (ASSSFDERPPLDFKSEGSSSQ). An interaction with tcf7l1 region spans residues 2–343 (KPIPATPDHL…PVRTNKPRTS (342 aa)). The segment covering 11–34 (LGQHQESPRRKDKGEAESERQRTR) has biased composition (basic and acidic residues). A coiled-coil region spans residues 19 to 47 (RRKDKGEAESERQRTRERLEATLAGLAEL). A compositionally biased stretch (basic and acidic residues) spans 520–530 (FDERPPLDFKS). The PDZ-binding signature appears at 821-824 (MTTV).

The protein belongs to the dapper family. In terms of assembly, interacts with dbf4, dvl2 and tcf7l1.

It is found in the cytoplasm. Its subcellular location is the nucleus. Involved in regulation of intracellular signaling pathways during development. Specifically thought to play a role in canonical and/or non-canonical Wnt signaling pathways through interaction with DSH (Dishevelled) family proteins. Binds to dvl2 and regulates the degradation of ctnnb1/beta-catenin, thereby modulating the transcriptional activation of target genes of the Wnt signaling pathway. May also bind to and directly stimulate the activity of tcf7l1. The chain is Dapper 1 (dact1) from Xenopus tropicalis (Western clawed frog).